The primary structure comprises 104 residues: MKNFFYKGNKKIQQRMLNYGMEWAATHGKVRTFICCYTLGGTASLKLYQKAYQNEKFMIMALCSYLGNIQINNPWESLNPYTMVQNKEKFLPLKFSEETQYFYI.

This sequence belongs to the asfivirus MGF 300 family.

In terms of biological role, plays a role in virus cell tropism, and may be required for efficient virus replication in macrophages. The polypeptide is Protein MGF 300-3L (African swine fever virus (isolate Tick/Malawi/Lil 20-1/1983) (ASFV)).